The primary structure comprises 148 residues: Protein Turandot Z (148 aa).

The N-terminal stretch at 1–23 (MYFAIRLSFVLAVLFCLTGNGSA) is a signal peptide.

This sequence belongs to the Turandot family.

The protein resides in the secreted. A humoral factor that may play a role in stress tolerance. The sequence is that of Protein Turandot Z from Drosophila simulans (Fruit fly).